We begin with the raw amino-acid sequence, 38 residues long: Large ribosomal subunit protein bL36 (38 aa).

Belongs to the bacterial ribosomal protein bL36 family.

In Pseudoalteromonas atlantica (strain T6c / ATCC BAA-1087), this protein is Large ribosomal subunit protein bL36.